A 298-amino-acid polypeptide reads, in one-letter code: Acetylglutamate kinase (298 aa).

Residues 64 to 65, Arg-86, and Asn-195 contribute to the substrate site; that span reads GG.

It belongs to the acetylglutamate kinase family. ArgB subfamily.

The protein localises to the cytoplasm. It carries out the reaction N-acetyl-L-glutamate + ATP = N-acetyl-L-glutamyl 5-phosphate + ADP. It functions in the pathway amino-acid biosynthesis; L-arginine biosynthesis; N(2)-acetyl-L-ornithine from L-glutamate: step 2/4. Functionally, catalyzes the ATP-dependent phosphorylation of N-acetyl-L-glutamate. This Aquifex aeolicus (strain VF5) protein is Acetylglutamate kinase.